We begin with the raw amino-acid sequence, 477 residues long: Aspartyl/glutamyl-tRNA(Asn/Gln) amidotransferase subunit B (477 aa).

It belongs to the GatB/GatE family. GatB subfamily. Heterotrimer of A, B and C subunits.

It carries out the reaction L-glutamyl-tRNA(Gln) + L-glutamine + ATP + H2O = L-glutaminyl-tRNA(Gln) + L-glutamate + ADP + phosphate + H(+). It catalyses the reaction L-aspartyl-tRNA(Asn) + L-glutamine + ATP + H2O = L-asparaginyl-tRNA(Asn) + L-glutamate + ADP + phosphate + 2 H(+). In terms of biological role, allows the formation of correctly charged Asn-tRNA(Asn) or Gln-tRNA(Gln) through the transamidation of misacylated Asp-tRNA(Asn) or Glu-tRNA(Gln) in organisms which lack either or both of asparaginyl-tRNA or glutaminyl-tRNA synthetases. The reaction takes place in the presence of glutamine and ATP through an activated phospho-Asp-tRNA(Asn) or phospho-Glu-tRNA(Gln). The sequence is that of Aspartyl/glutamyl-tRNA(Asn/Gln) amidotransferase subunit B from Ureaplasma urealyticum serovar 10 (strain ATCC 33699 / Western).